Consider the following 351-residue polypeptide: Quinolinate phosphoribosyltransferase [decarboxylating] 2, mitochondrial (351 aa).

Substrate contacts are provided by residues Arg-142, 173 to 175 (TRK), Arg-197, Lys-207, Glu-240, Asp-267, 299 to 301 (SGN), and 320 to 322 (SGA).

Belongs to the NadC/ModD family.

The protein resides in the mitochondrion. It carries out the reaction nicotinate beta-D-ribonucleotide + CO2 + diphosphate = quinolinate + 5-phospho-alpha-D-ribose 1-diphosphate + 2 H(+). It functions in the pathway alkaloid biosynthesis; nicotine biosynthesis. It participates in cofactor biosynthesis; NAD(+) biosynthesis; nicotinate D-ribonucleotide from quinolinate: step 1/1. Its function is as follows. Involved in the biosynthesis of pyridine alkaloid natural products, leading mainly to the production of anabasine, anatabine, nicotine and nornicotine, effective deterrents against herbivores with antiparasitic and pesticide properties (neurotoxins); nornicotine serves as the precursor in the synthesis of the carcinogen compound N'-nitrosonornicotine (NNN). Involved in the catabolism of quinolinic acid (QA). This chain is Quinolinate phosphoribosyltransferase [decarboxylating] 2, mitochondrial, found in Nicotiana glauca (Glaucous tobacco).